Here is a 70-residue protein sequence, read N- to C-terminus: Waprin-Thr1 (70 aa).

The signal sequence occupies residues 1-19 (MKARLLLLSVVILVGMVSA). Residues 20–70 (ENEKAGSCPDVNQPIPPLGLCRNMCESDSGCPNNEKCCKNGCGFMTCSRPR) enclose the WAP domain. Intrachain disulfides connect cysteine 27–cysteine 57, cysteine 40–cysteine 61, cysteine 44–cysteine 56, and cysteine 50–cysteine 66.

Belongs to the venom waprin family. Expressed by the venom gland.

It localises to the secreted. In terms of biological role, damages membranes of susceptible bacteria. Has no hemolytic activity. Not toxic to mice. Does not inhibit the proteinases elastase and cathepsin G. The protein is Waprin-Thr1 of Thrasops jacksonii (Jackson's black tree snake).